The primary structure comprises 506 residues: Trans-cinnamate 4-monooxygenase C4H1 (506 aa).

2 consecutive short sequence motifs (nuclear localization signal) follow at residues 161-168 (VKKMPESA) and 247-254 (QRRLQLFK). Residue Cys-448 participates in heme binding.

Belongs to the cytochrome P450 family. The cofactor is heme.

The protein localises to the nucleus. The enzyme catalyses (E)-cinnamate + reduced [NADPH--hemoprotein reductase] + O2 = (E)-4-coumarate + oxidized [NADPH--hemoprotein reductase] + H2O + H(+). Its pathway is phenylpropanoid metabolism; trans-4-coumarate biosynthesis; trans-4-coumarate from trans-cinnamate: step 1/1. Its function is as follows. Component of the floral volatile benzenoid/phenylpropanoid (FVBP) biosynthetic pathway that controls carbon flux to pigments essential for pollination or UV protection, to numerous pytoalexins synthesized by plants when challenged by pathogens, and to lignins. The sequence is that of Trans-cinnamate 4-monooxygenase C4H1 from Petunia hybrida (Petunia).